We begin with the raw amino-acid sequence, 497 residues long: MESSEDQPGPQPQYPGNHCIRDGDFVVLKREDVFKAVQVQRRKKVTFEKQWFYLDNIIGHSYGTTFEVTNGGSLQPKKKKEEPTSETKEAGTDNRNIIDDGKSQKLTQDDIKALKDKGIKGEEIVQQLIENSTTFRDKTEFAQDKYIKKKKKKYEAMITVVKPSTRILSVMYYAREPGKINHMRYDTLAQMLTLGNIRAGNKMIVMETCAGLVLGAMMERMGGFGSIIQLYPGGGPVRAATACFGFPKSFLSGLYEFPLNKVDSLLNGTFSAEMLSSEPKDIASVEESNGTLEEKQTSEQENEDSIAEAPESNHPEEQERMEIVSQDPDYKEPKESGSKKDYIQEKQRRQEEQKKRHLEAAALLSERNADGLIVASRFHPTPLLLSLLDFVAPSRPFVVYCQYKEPLLECYTKLRERGGVINLRLSETWLRNYQVLPDRSHPKLLMSGGGGYLLSGFTVAMDNLKADPSLKSSTSTLESHKTEEPAAKKRKCPESDS.

Positions 69 to 102 (TNGGSLQPKKKKEEPTSETKEAGTDNRNIIDDGK) are disordered. Residues 79–102 (KKEEPTSETKEAGTDNRNIIDDGK) show a composition bias toward basic and acidic residues. The substrate stretch occupies residues 94–104 (NRNIIDDGKSQ). The residue at position 107 (T107) is a Phosphothreonine. 2 substrate regions span residues 145-154 (KYIKKKKKKY) and 175-182 (REPGKINH). Residues 276–354 (SSEPKDIASV…EKQRRQEEQK (79 aa)) are disordered. A phosphoserine mark is found at S298 and S305. Residues 311-354 (ESNHPEEQERMEIVSQDPDYKEPKESGSKKDYIQEKQRRQEEQK) are compositionally biased toward basic and acidic residues. Substrate-binding residues include R349 and R377. 2 substrate regions span residues 415–423 (RERGGVINL) and 434–441 (QVLPDRSH). The disordered stretch occupies residues 468–497 (PSLKSSTSTLESHKTEEPAAKKRKCPESDS). Over residues 478–497 (ESHKTEEPAAKKRKCPESDS) the composition is skewed to basic and acidic residues.

The protein belongs to the TRM6/GCD10 family. In terms of assembly, heterotetramer; composed of two copies of TRMT6 and two copies of TRMT61A.

It localises to the nucleus. Its function is as follows. Substrate-binding subunit of tRNA (adenine-N(1)-)-methyltransferase, which catalyzes the formation of N(1)-methyladenine at position 58 (m1A58) in initiator methionyl-tRNA. Together with the TRMT61A catalytic subunit, part of a mRNA N(1)-methyltransferase complex that mediates methylation of adenosine residues at the N(1) position of a small subset of mRNAs: N(1) methylation takes place in tRNA T-loop-like structures of mRNAs and is only present at low stoichiometries. This chain is tRNA (adenine(58)-N(1))-methyltransferase non-catalytic subunit TRM6 (TRMT6), found in Bos taurus (Bovine).